A 532-amino-acid chain; its full sequence is Sodium-dependent lysophosphatidylcholine symporter 1-A (532 aa).

Topologically, residues 1–40 (MARGEGAEQFSSGLLPTAKSVTQNEIKMVKLPKQQERKRA) are cytoplasmic. The helical transmembrane segment at 41–70 (LTVWSKVCFAIGGAPYQITGTALGFFLQIF) threads the bilayer. Over 71–81 (LLDVAQLNPLN) the chain is Extracellular. A helical membrane pass occupies residues 82-102 (ASVILFVGRAWDAVTDPTVGF). Over 103–114 (LVSRTPWTRHGR) the chain is Cytoplasmic. A helical transmembrane segment spans residues 115–134 (MMPWILVSTIPAVLCYFLIW). Over 135 to 144 (VVPPIEQGKM) the chain is Extracellular. The helical transmembrane segment at 145-169 (MWYLLFYCLFQTLQTCFHVPYSALT) threads the bilayer. The Cytoplasmic segment spans residues 170-176 (MFISTEQ). The chain crosses the membrane as a helical span at residues 177–208 (RERDSATAYRMTVEVFGTVVGTAIQGQIVGMA). At 209–232 (NTPCKNNTSPNNSSNDLIQSNNSH) the chain is on the extracellular side. A disulfide bond links Cys-212 and Cys-464. 3 N-linked (GlcNAc...) asparagine glycosylation sites follow: Asn-214, Asn-220, and Asn-229. The chain crosses the membrane as a helical span at residues 233 to 266 (IPLKSNIFDERCAYMIASAVISLIYVVCAAVLFF). At 267-297 (GVREQDVQGELKAQKRVSFQKGLRLVMGHGP) the chain is on the cytoplasmic side. The chain crosses the membrane as a helical span at residues 298–324 (YVKLVLAFLFTSLAFMLLEGNFAVFIK). At 325–335 (YTLGFREDFQN) the chain is on the extracellular side. Residues 336–354 (ILLVIMVSATVSIPMWQWF) form a helical membrane-spanning segment. Residues 355-358 (LCRF) lie on the Cytoplasmic side of the membrane. The chain crosses the membrane as a helical span at residues 359–380 (GKKTAVYIGITWAVPFMILVVS). Topologically, residues 381–383 (VNS) are extracellular. A helical transmembrane segment spans residues 384 to 420 (SLIVSYIVSIAAGVSVGAAFLLPWSMLPDVVDDFKLQ). Residues 421–430 (NPTSQGHEAI) are Cytoplasmic-facing. The helical transmembrane segment at 431 to 457 (FYSFYVFFTKFASGVSLGVSTLALSFA) threads the bilayer. Residues 458–469 (GYETGVCVQSDS) lie on the Extracellular side of the membrane. The chain crosses the membrane as a helical span at residues 470-493 (VNLTLKLLVSAAPVSLIALGLLIF). Residues 494-532 (MTYPIDEERREYNNKQLQLLLRNEEEEDEMEVLKPDITA) lie on the Cytoplasmic side of the membrane.

Belongs to the major facilitator superfamily. In terms of tissue distribution, expressed in the developing nervous system.

It localises to the cell membrane. Its subcellular location is the endoplasmic reticulum membrane. The enzyme catalyses a 1-acyl-sn-glycero-3-phosphocholine(in) + Na(+)(in) = a 1-acyl-sn-glycero-3-phosphocholine(out) + Na(+)(out). It catalyses the reaction 1-(4Z,7Z,10Z,13Z,16Z,19Z-docosahexaenoyl)-sn-glycero-3-phosphocholine(in) + Na(+)(in) = 1-(4Z,7Z,10Z,13Z,16Z,19Z-docosahexaenoyl)-sn-glycero-3-phosphocholine(out) + Na(+)(out). It carries out the reaction 1-(9Z-octadecenoyl)-sn-glycero-3-phosphocholine(in) + Na(+)(in) = 1-(9Z-octadecenoyl)-sn-glycero-3-phosphocholine(out) + Na(+)(out). The catalysed reaction is 1-hexadecanoyl-sn-glycero-3-phosphocholine(in) + Na(+)(in) = 1-hexadecanoyl-sn-glycero-3-phosphocholine(out) + Na(+)(out). The enzyme catalyses a 1-acyl-sn-glycero-3-phosphoethanolamine(in) + Na(+)(in) = a 1-acyl-sn-glycero-3-phosphoethanolamine(out) + Na(+)(out). Its function is as follows. Sodium-dependent lysophosphatidylcholine (LPC) symporter, which plays an essential role for blood-brain barrier formation and function. Specifically expressed in endothelium of the blood-brain barrier of micro-vessels and transports LPC into the brain. Transport of LPC is essential because it constitutes the major mechanism by which docosahexaenoic acid (DHA), an omega-3 fatty acid that is essential for normal brain growth and cognitive function, enters the brain. Transports LPC carrying long-chain fatty acids such LPC oleate and LPC palmitate with a minimum acyl chain length of 14 carbons. Does not transport docosahexaenoic acid in unesterified fatty acid. The polypeptide is Sodium-dependent lysophosphatidylcholine symporter 1-A (mfsd2aa) (Danio rerio (Zebrafish)).